A 117-amino-acid chain; its full sequence is NYGESGIVYPDGRLVQFTRAEADNIAEIGEAGVVMHDGTHVQFDRDMAAHHAGTPPQPMPERVTLDQSYGYSGIIMPDGNNRQFTAAESDNLVLVGPSGAVTADGKNVQFTDDGLPT.

Tandem repeats lie at residues 1-17 (NYGESGIVYPDGRLVQF), 26-43 (AEIGEAGVVMHDGTHVQF), 67-84 (QSYGYSGIIMPDGNNRQF), and 93-110 (VLVGPSGAVTADGKNVQF).

Calcified shell.

The sequence is that of Cuticle protein CP1246 from Cancer pagurus (Rock crab).